Here is a 474-residue protein sequence, read N- to C-terminus: Aspartyl/glutamyl-tRNA(Asn/Gln) amidotransferase subunit B (474 aa).

It belongs to the GatB/GatE family. GatB subfamily. As to quaternary structure, heterotrimer of A, B and C subunits.

The enzyme catalyses L-glutamyl-tRNA(Gln) + L-glutamine + ATP + H2O = L-glutaminyl-tRNA(Gln) + L-glutamate + ADP + phosphate + H(+). The catalysed reaction is L-aspartyl-tRNA(Asn) + L-glutamine + ATP + H2O = L-asparaginyl-tRNA(Asn) + L-glutamate + ADP + phosphate + 2 H(+). In terms of biological role, allows the formation of correctly charged Asn-tRNA(Asn) or Gln-tRNA(Gln) through the transamidation of misacylated Asp-tRNA(Asn) or Glu-tRNA(Gln) in organisms which lack either or both of asparaginyl-tRNA or glutaminyl-tRNA synthetases. The reaction takes place in the presence of glutamine and ATP through an activated phospho-Asp-tRNA(Asn) or phospho-Glu-tRNA(Gln). This chain is Aspartyl/glutamyl-tRNA(Asn/Gln) amidotransferase subunit B, found in Persephonella marina (strain DSM 14350 / EX-H1).